Consider the following 186-residue polypeptide: Peptidyl-tRNA hydrolase (186 aa).

Y14 contributes to the tRNA binding site. Residue H19 is the Proton acceptor of the active site. TRNA-binding residues include Y61, N63, and N107.

It belongs to the PTH family. In terms of assembly, monomer.

Its subcellular location is the cytoplasm. It catalyses the reaction an N-acyl-L-alpha-aminoacyl-tRNA + H2O = an N-acyl-L-amino acid + a tRNA + H(+). Functionally, hydrolyzes ribosome-free peptidyl-tRNAs (with 1 or more amino acids incorporated), which drop off the ribosome during protein synthesis, or as a result of ribosome stalling. In terms of biological role, catalyzes the release of premature peptidyl moieties from peptidyl-tRNA molecules trapped in stalled 50S ribosomal subunits, and thus maintains levels of free tRNAs and 50S ribosomes. This is Peptidyl-tRNA hydrolase from Helicobacter pylori (strain HPAG1).